The following is a 236-amino-acid chain: Small ribosomal subunit protein uS5 (236 aa).

The S5 DRBM domain maps to 61-124; it reads ENQEIIDIAL…NYAKLNIIEI (64 aa).

It belongs to the universal ribosomal protein uS5 family. Part of the 30S ribosomal subunit. Contacts protein S4.

Its function is as follows. With S4 and S12 plays an important role in translational accuracy. The sequence is that of Small ribosomal subunit protein uS5 from Pyrococcus horikoshii (strain ATCC 700860 / DSM 12428 / JCM 9974 / NBRC 100139 / OT-3).